Reading from the N-terminus, the 251-residue chain is 2,3-bisphosphoglycerate-dependent phosphoglycerate mutase (251 aa).

Residues 11–18 (RHGESDWN), 24–25 (TG), Arg-63, 90–93 (ERHY), Lys-101, 117–118 (RR), and 184–185 (GN) contribute to the substrate site. The Tele-phosphohistidine intermediate role is filled by His-12. The active-site Proton donor/acceptor is Glu-90.

The protein belongs to the phosphoglycerate mutase family. BPG-dependent PGAM subfamily.

It catalyses the reaction (2R)-2-phosphoglycerate = (2R)-3-phosphoglycerate. Its pathway is carbohydrate degradation; glycolysis; pyruvate from D-glyceraldehyde 3-phosphate: step 3/5. In terms of biological role, catalyzes the interconversion of 2-phosphoglycerate and 3-phosphoglycerate. The sequence is that of 2,3-bisphosphoglycerate-dependent phosphoglycerate mutase from Mycobacterium ulcerans (strain Agy99).